A 23-amino-acid chain; its full sequence is Protein YqfH (23 aa).

This is Protein YqfH from Escherichia coli (strain K12).